The sequence spans 625 residues: Endo-1,4-beta-xylanase A (625 aa).

An N-terminal signal peptide occupies residues Met1–Ala19. A GH11 1 domain is found at Val35–Glu231. Residues Asp245 to Ser283 are disordered. Gly residues predominate over residues Ser252–Gln276. Positions Gly255 to Ser279 are linker. 2 tandem repeats follow at residues Gly259–Asn268 and Gly269–Gln278. The tract at residues Gly259–Gln278 is 2 X 10 AA tandem repeats of G-Q-G-[LQ]-G-N-G-Q-G-[NQ]. CBM10 domains are found at residues Lys285–Gly324 and Asn332–Gly371. Residues Asn374–Asn403 form a linker region. Positions Thr379–Ser399 are disordered. Residues Thr416–Phe617 enclose the GH11 2 domain. Catalysis depends on Glu510, which acts as the Nucleophile. Glu603 serves as the catalytic Proton donor.

Belongs to the glycosyl hydrolase 11 (cellulase G) family.

The catalysed reaction is Endohydrolysis of (1-&gt;4)-beta-D-xylosidic linkages in xylans.. It participates in glycan degradation; xylan degradation. Functionally, hydrolyzes 1,4-beta linked polysaccharide backbones of xylans, one of the major hemicellulose components in hardwoods and softwoods. It is more active against xylopentaose than xylotetraose, has trace activity against xylotriose. The major products released from hydrolysis of xylooligosaccharides are xylobiose and xylotriose. The reiterated 40 AA domain is involved in binding the cellulase-hemicellulase complex. The chain is Endo-1,4-beta-xylanase A (XYNA) from Piromyces sp.